Consider the following 318-residue polypeptide: Tyrosine recombinase XerC (318 aa).

Positions 17-108 (PEVMAERRRW…GLRSFLRYLE (92 aa)) constitute a Core-binding (CB) domain. Residues 129-312 (SLPKALTDRE…DSARLLEIYD (184 aa)) form the Tyr recombinase domain. Residues R172, K196, H264, R267, and H290 contribute to the active site. Y299 (O-(3'-phospho-DNA)-tyrosine intermediate) is an active-site residue.

Belongs to the 'phage' integrase family. XerC subfamily. As to quaternary structure, forms a cyclic heterotetrameric complex composed of two molecules of XerC and two molecules of XerD.

Its subcellular location is the cytoplasm. Its function is as follows. Site-specific tyrosine recombinase, which acts by catalyzing the cutting and rejoining of the recombining DNA molecules. The XerC-XerD complex is essential to convert dimers of the bacterial chromosome into monomers to permit their segregation at cell division. It also contributes to the segregational stability of plasmids. The chain is Tyrosine recombinase XerC from Rhizobium meliloti (strain 1021) (Ensifer meliloti).